Reading from the N-terminus, the 407-residue chain is Probable NADPH dehydrogenase (407 aa).

FMN contacts are provided by threonine 49 and glutamine 124. A substrate-binding site is contributed by 201–204 (HGAH). Tyrosine 206 acts as the Proton donor in catalysis. 2 residues coordinate FMN: arginine 254 and arginine 357.

This sequence belongs to the NADH:flavin oxidoreductase/NADH oxidase family. FMN is required as a cofactor.

It carries out the reaction A + NADPH + H(+) = AH2 + NADP(+). In terms of biological role, oxidoreductase that binds mammalian estrogens with high affinity. The sequence is that of Probable NADPH dehydrogenase from Candida albicans (Yeast).